Consider the following 292-residue polypeptide: 33 kDa chaperonin (292 aa).

Intrachain disulfides connect Cys-230–Cys-232 and Cys-263–Cys-266.

This sequence belongs to the HSP33 family. Post-translationally, under oxidizing conditions two disulfide bonds are formed involving the reactive cysteines. Under reducing conditions zinc is bound to the reactive cysteines and the protein is inactive.

The protein localises to the cytoplasm. Functionally, redox regulated molecular chaperone. Protects both thermally unfolding and oxidatively damaged proteins from irreversible aggregation. Plays an important role in the bacterial defense system toward oxidative stress. This is 33 kDa chaperonin from Enterobacter sp. (strain 638).